A 1037-amino-acid chain; its full sequence is Probable serine/threonine-protein kinase KCC4 (1037 aa).

The Protein kinase domain maps to 21–285 (WKLGETLGFG…IRDILSHPLL (265 aa)). Residues 27–35 (LGFGSTGKV) and K50 each bind ATP. D152 functions as the Proton acceptor in the catalytic mechanism. Positions 372 to 387 (NKKNRNKIKKTKKNKR) are enriched in basic residues. The disordered stretch occupies residues 372-494 (NKKNRNKIKK…MPNTKRSSLT (123 aa)). The segment covering 388 to 404 (SSTLSSSSSLLLNNRSI) has biased composition (low complexity). Position 396 is a phosphoserine (S396). Residues 408–427 (PRRRTSKRHSREFSSSRKRS) show a composition bias toward basic residues. Residues 453–465 (NVASANTQATPSG) show a composition bias toward polar residues. The segment covering 469–480 (PHKRNSKKRSSK) has biased composition (basic residues). Positions 481-494 (RLSYMPNTKRSSLT) are enriched in low complexity. S675, S707, S777, S822, S825, and S871 each carry phosphoserine. 3 disordered regions span residues 746 to 804 (LIKE…DFPQ), 810 to 829 (QEYD…KSAE), and 861 to 918 (TLPS…TVKK). Over residues 861-873 (TLPSLTSNNSSVG) the composition is skewed to polar residues. Basic and acidic residues predominate over residues 879–888 (GAEKGTESEK).

It belongs to the protein kinase superfamily. CAMK Ser/Thr protein kinase family. NIM1 subfamily. As to quaternary structure, interacts with septin proteins, primarily with CDC11. Interacts with SWE1 and NAP1.

It is found in the bud neck. The catalysed reaction is L-seryl-[protein] + ATP = O-phospho-L-seryl-[protein] + ADP + H(+). The enzyme catalyses L-threonyl-[protein] + ATP = O-phospho-L-threonyl-[protein] + ADP + H(+). In terms of biological role, involved in regulation of bud growth during cell cycle and in septin organization. Plays a role in cell wall synthesis. The chain is Probable serine/threonine-protein kinase KCC4 (KCC4) from Saccharomyces cerevisiae (strain ATCC 204508 / S288c) (Baker's yeast).